A 347-amino-acid polypeptide reads, in one-letter code: Endophilin-A3 (347 aa).

Residues Met-1–Ile-21 form a membrane-binding amphipathic helix region. A BAR domain is found at Ser-18 to Lys-249. The required for dimerization upon membrane association stretch occupies residues Pro-60–Pro-87. Positions Glu-180–Met-201 form a coiled coil. Residues Phe-218–Glu-254 are interaction with ARC. Residues Phe-255–Pro-288 are disordered. Polar residues predominate over residues Asn-261–Thr-281. The SH3 domain occupies Ala-285–Pro-344.

Belongs to the endophilin family. In terms of assembly, interacts with ARC, DNM1, SGIP1, SYNJ1 and DYDC1. Interacts with FASLG. Interacts with ATXN2. Interacts with BIN2.

Its subcellular location is the cytoplasm. It is found in the early endosome membrane. Implicated in endocytosis. May recruit other proteins to membranes with high curvature. This is Endophilin-A3 (Sh3gl3) from Mus musculus (Mouse).